The chain runs to 130 residues: Small ribosomal subunit protein uS8 (130 aa).

The protein belongs to the universal ribosomal protein uS8 family. In terms of assembly, part of the 30S ribosomal subunit. Contacts proteins S5 and S12.

Functionally, one of the primary rRNA binding proteins, it binds directly to 16S rRNA central domain where it helps coordinate assembly of the platform of the 30S subunit. The polypeptide is Small ribosomal subunit protein uS8 (Buchnera aphidicola subsp. Baizongia pistaciae (strain Bp)).